The chain runs to 240 residues: Purine nucleoside phosphorylase RP494 (240 aa).

Zn(2+) contacts are provided by His60, Cys96, and His113.

The protein belongs to the purine nucleoside phosphorylase YfiH/LACC1 family. In terms of assembly, homodimer. Requires Cu(2+) as cofactor. It depends on Zn(2+) as a cofactor.

The catalysed reaction is adenosine + phosphate = alpha-D-ribose 1-phosphate + adenine. It catalyses the reaction S-methyl-5'-thioadenosine + phosphate = 5-(methylsulfanyl)-alpha-D-ribose 1-phosphate + adenine. It carries out the reaction inosine + phosphate = alpha-D-ribose 1-phosphate + hypoxanthine. The enzyme catalyses adenosine + H2O + H(+) = inosine + NH4(+). Its function is as follows. Purine nucleoside enzyme that catalyzes the phosphorolysis of adenosine and inosine nucleosides, yielding D-ribose 1-phosphate and the respective free bases, adenine and hypoxanthine. Also catalyzes the phosphorolysis of S-methyl-5'-thioadenosine into adenine and S-methyl-5-thio-alpha-D-ribose 1-phosphate. Also has adenosine deaminase activity. The protein is Purine nucleoside phosphorylase RP494 of Rickettsia prowazekii (strain Madrid E).